A 250-amino-acid chain; its full sequence is tRNA-specific adenosine deaminase subunit TAD2 (250 aa).

The CMP/dCMP-type deaminase domain occupies 1–119 (MQHIKHMRTA…ERFGGNGTVL (119 aa)). Zn(2+) is bound at residue His54. Glu56 (proton donor) is an active-site residue. Residues Cys88 and Cys91 each contribute to the Zn(2+) site.

This sequence belongs to the cytidine and deoxycytidylate deaminase family. ADAT2 subfamily. Heterodimer with TAD3. Requires Zn(2+) as cofactor.

It is found in the cytoplasm. The protein resides in the nucleus. It catalyses the reaction adenosine(34) in tRNA + H2O + H(+) = inosine(34) in tRNA + NH4(+). Functionally, structural subunit of tRNA-specific adenosine deaminase, which deaminates adenosine-34 (the first, also called wobble position of the anticodon) to inosine in many tRNAs. Inosine-34 allows the decoding of 3 different nucleotides at the third position of mRNA codons, as inosine is able to pair with U, C, and A. This chain is tRNA-specific adenosine deaminase subunit TAD2 (TAD2), found in Saccharomyces cerevisiae (strain ATCC 204508 / S288c) (Baker's yeast).